The chain runs to 197 residues: Sodium/potassium-transporting ATPase subunit beta-1-interacting protein 3 (197 aa).

4 consecutive transmembrane segments (helical) span residues 2-22, 35-55, 62-82, and 152-172; these read GCCT…VSAL, APIL…FGTI, IMVY…IICF, and VQIL…SISM.

Belongs to the NKAIN family. In terms of assembly, interacts with ATP1B1.

The protein localises to the cell membrane. This chain is Sodium/potassium-transporting ATPase subunit beta-1-interacting protein 3 (NKAIN3), found in Homo sapiens (Human).